Consider the following 710-residue polypeptide: Choline transporter-like protein 5 (710 aa).

The disordered stretch occupies residues 1–21 (MARKRKPPSSQGDPRRYDPDF). The Cytoplasmic segment spans residues 1–32 (MARKRKPPSSQGDPRRYDPDFQGPTAKRTCTD). Residues 33-53 (VLCCLIFLLFILGYVLLGLLA) form a helical membrane-spanning segment. At 54-236 (WAHGDPRKMA…KLLEDYATSW (183 aa)) the chain is on the extracellular side. Residues Asn-82 and Asn-184 are each glycosylated (N-linked (GlcNAc...) asparagine). A helical transmembrane segment spans residues 237-257 (KWILIGLTVAMALSWTFLILL). Residues 258–260 (RFT) are Cytoplasmic-facing. A helical membrane pass occupies residues 261–281 (AGFLFWFFIFGVLGIIGYGIW). The Extracellular portion of the chain corresponds to 282 to 319 (YCFLEYSSIQQRPQSTFWMYGFGIQRRVNMFFHLKETW). A helical membrane pass occupies residues 320–340 (FSMMIILSAIEIIIIIVLIFL). Residues 341 to 345 (RTRIQ) are Cytoplasmic-facing. Residues 346-366 (VAIILLQEGSKAISYLPSALI) form a helical membrane-spanning segment. At 367 to 368 (YP) the chain is on the extracellular side. Residues 369 to 389 (VLTFILLSICISYWAVTAVFL) traverse the membrane as a helical segment. Topologically, residues 390-454 (ATSGVPIFKV…NYILTFQVYN (65 aa)) are cytoplasmic. The chain crosses the membrane as a helical span at residues 455–475 (LFAFLWLINFVIALGQCALAG). Over 476-509 (AFASYYWAMKKPDDIPPYPLFTAFGRAVRYHTGS) the chain is Extracellular. Residues 510-530 (LAFGSLILASVQMFKVIVEYL) traverse the membrane as a helical segment. Topologically, residues 531-604 (DRRLKKAQNS…KVTVTDEVTY (74 aa)) are cytoplasmic. Residues 605-625 (FVLLLGKVLVSGIVGVLAFLL) form a helical membrane-spanning segment. Residues 626 to 643 (FTERLQIIVDGPTTLNYY) are Extracellular-facing. The helical transmembrane segment at 644-664 (WVPFLTLVFGSYMIAHGFFSV) threads the bilayer. Topologically, residues 665 to 710 (YSMCVETIFICFLEDLERNEGSPSRPYFVTPALMNILLEQGKIKKQ) are cytoplasmic.

It belongs to the CTL (choline transporter-like) family.

Its subcellular location is the cell membrane. It carries out the reaction choline(out) + n H(+)(in) = choline(in) + n H(+)(out). Choline/H+ antiporter. The polypeptide is Choline transporter-like protein 5 (Slc44a5) (Mus musculus (Mouse)).